A 577-amino-acid chain; its full sequence is Peroxynitrite isomerase THAP4 (577 aa).

Residues 1–85 (MVICCAAVNC…LKPTAVPSIF (85 aa)) form a THAP-type zinc finger. A disordered region spans residues 84–221 (IFHLTEKKRG…DKSGISMDDF (138 aa)). Over residues 157–170 (AAQEAASQEQAQQA) the composition is skewed to low complexity. S163 carries the post-translational modification Phosphoserine. An HCFC1-binding motif (HBM) motif is present at residues 235 to 238 (LHSY). Phosphoserine is present on S239. Positions 240–324 (FSSKHTRERP…AVQSEHSDAS (85 aa)) are disordered. Basic and acidic residues predominate over residues 247-266 (ERPSVPREPIDRKRLKKDVE). Positions 290–300 (TATPQKPSQSP) are enriched in low complexity. Residues 415 to 577 (PPKMNPVVEP…LHVTYKKVTP (163 aa)) are nitrobindin. Heme b contacts are provided by T444 and H567.

In the C-terminal section; belongs to the nitrobindin family. Homodimer. Heme b is required as a cofactor.

The protein resides in the cytoplasm. It localises to the nucleus. It carries out the reaction peroxynitrite = nitrate. The protein operates within nitrogen metabolism. Its function is as follows. Heme-binding protein able to scavenge peroxynitrite and to protect free L-tyrosine against peroxynitrite-mediated nitration, by acting as a peroxynitrite isomerase that converts peroxynitrite to nitrate. Therefore, this protein likely plays a role in peroxynitrite sensing and in the detoxification of reactive nitrogen and oxygen species (RNS and ROS, respectively). Is able to bind nitric oxide (NO) in vitro, but may act as a sensor of peroxynitrite levels in vivo, possibly modulating the transcriptional activity residing in the N-terminal region. The polypeptide is Peroxynitrite isomerase THAP4 (Homo sapiens (Human)).